The chain runs to 1464 residues: MGARNSVLRGKKADELERIRLRPGGKKKYRLKHIVWAANKLDRFGLAESLLESKEGCQKILTVLDPMVPTGSENLKSLFNTVCVIWCIHAEEKVKDTEGAKQIVRRHLVAETGTAEKMPSTSRPTAPSSEKGGNYPVQHVGGNYTHIPLSPRTLNAWVKLVEEKKFGAEVVPGFQALSEGCTPYDINQMLNCVGDHQAAMQIIREIINEEAAEWDVQHPIPGPLPAGQLREPRGSDIAGTTSTVEEQIQWMFRPQNPVPVGNIYRRWIQIGLQKCVRMYNPTNILDIKQGPKEPFQSYVDRFYKSLRAEQTDPAVKNWMTQTLLVQNANPDCKLVLKGLGMNPTLEEMLTACQGVGGPGQKARLMAEALKEVIGPAPIPFAAAQQRKAFKCWNCGKEGHSARQCRAPRRQGCWKCGKPGHIMTNCPDRQAGFLRTGPLGKEAPQLPRGPSSAGADTNSTPSGSSSGSTGEIYAAREKTERAERETIQGSDRGLTAPRAGGDTIQGATNRGLAAPQFSLWKRPVVTAYIEGQPVEVLLDTGADDSIVAGIELGNNYSPKIVGGIGGFINTKEYKNVEIEVLNKKVRATIMTGDTPINIFGRNILTALGMSLNLPVAKVEPIKIMLKPGKDGPKLRQWPLTKEKIEALKEICEKMEKEGQLEEAPPTNPYNTPTFAIKKKDKNKWRMLIDFRELNKVTQDFTEIQLGIPHPAGLAKKRRITVLDVGDAYFSIPLHEDFRPYTAFTLPSVNNAEPGKRYIYKVLPQGWKGSPAIFQHTMRQVLEPFRKANKDVIIIQYMDDILIASDRTDLEHDRVVLQLKELLNGLGFSTPDEKFQKDPPYHWMGYELWPTKWKLQKIQLPQKEIWTVNDIQKLVGVLNWAAQLYPGIKTKHLCRLIRGKMTLTEEVQWTELAEAELEENRIILSQEQEGHYYQEEKELEATVQKDQENQWTYKIHQEEKILKVGKYAKVKNTHTNGIRLLAQVVQKIGKEALVIWGRIPKFHLPVEREIWEQWWDNYWQVTWIPDWDFVSTPPLVRLAFNLVGDPIPGAETFYTDGSCNRQSKEGKAGYVTDRGKDKVKKLEQTTNQQAELEAFAMALTDSGPKVNIIVDSQYVMGISASQPTESESKIVNQIIEEMIKKEAIYVAWVPAHKGIGGNQEVDHLVSQGIRQVLFLEKIEPAQEEHEKYHSNVKELSHKFGIPNLVARQIVNSCAQCQQKGEAIHGQVNAELGTWQMDCTHLEGKIIIVAVHVASGFIEAEVIPQESGRQTALFLLKLASRWPITHLHTDNGANFTSQEVKMVAWWIGIEQSFGVPYNPQSQGVVEAMNHHLKNQISRIREQANTIETIVLMAIHCMNFKRRGGIGDMTPSERLINMITTEQEIQFLQAKNSKLKDFRVYFREGRDQLWKGPGELLWKGEGAVLVKVGTDIKIIPRRKAKIIRDYGGRQEMDSGSHLEGAREDGEMA.

Gly2 carries N-myristoyl glycine; by host lipidation. The interval 7–31 is interaction with Gp41; sequence VLRGKKADELERIRLRPGGKKKYRL. The Nuclear export signal signature appears at 16–22; it reads LERIRLR. The short motif at 26-32 is the Nuclear localization signal element; sequence KKKYRLK. Residues 111–136 form a disordered region; sequence ETGTAEKMPSTSRPTAPSSEKGGNYP. Residues 119–128 show a composition bias toward polar residues; that stretch reads PSTSRPTAPS. The residue at position 135 (Tyr135) is a Phosphotyrosine; by host. The tract at residues 191–228 is interaction with human PPIA/CYPA and NUP153; sequence NCVGDHQAAMQIIREIINEEAAEWDVQHPIPGPLPAGQ. Residues 279-365 form a dimerization/Multimerization of capsid protein p24 region; sequence YNPTNILDIK…GGPGQKARLM (87 aa). 2 CCHC-type zinc fingers span residues 389 to 406 and 410 to 427; these read FKCW…QCRA and QGCW…NCPD. Residues 432-500 are disordered; it reads FLRTGPLGKE…RGLTAPRAGG (69 aa). A compositionally biased stretch (low complexity) spans 456–469; sequence TNSTPSGSSSGSTG. The span at 473-485 shows a compositional bias: basic and acidic residues; that stretch reads AAREKTERAERET. Positions 514–518 are dimerization of protease; the sequence is PQFSL. The 70-residue stretch at 533–602 folds into the Peptidase A2 domain; it reads VEVLLDTGAD…TPINIFGRNI (70 aa). Asp538 functions as the For protease activity; shared with dimeric partner in the catalytic mechanism. 2 dimerization of protease regions span residues 562–568 and 601–613; these read GIGGFIN and NILT…LNLP. The Reverse transcriptase domain occupies 656–846; it reads EGQLEEAPPT…PPYHWMGYEL (191 aa). Mg(2+) is bound by residues Asp722, Asp797, and Asp798. Positions 839-847 are RT 'primer grip'; the sequence is YHWMGYELW. The short motif at 1009 to 1025 is the Tryptophan repeat motif element; it reads WEQWWDNYWQVTWIPDW. Residues 1045–1168 enclose the RNase H type-1 domain; the sequence is IPGAETFYTD…VDHLVSQGIR (124 aa). Residues Asp1054, Glu1089, Asp1109, and Asp1160 each coordinate Mg(2+). The segment at 1174 to 1215 adopts an Integrase-type zinc-finger fold; the sequence is EKIEPAQEEHEKYHSNVKELSHKFGIPNLVARQIVNSCAQCQ. 4 residues coordinate Zn(2+): His1183, His1187, Cys1211, and Cys1214. The Integrase catalytic domain maps to 1224–1375; that stretch reads QVNAELGTWQ…TPSERLINMI (152 aa). 3 residues coordinate Mg(2+): Asp1235, Asp1287, and Glu1323. Positions 1394–1441 form a DNA-binding region, integrase-type; that stretch reads FRVYFREGRDQLWKGPGELLWKGEGAVLVKVGTDIKIIPRRKAKIIRD.

In terms of assembly, homotrimer; further assembles as hexamers of trimers. Interacts with gp41 (via C-terminus). Interacts with host CALM1; this interaction induces a conformational change in the Matrix protein, triggering exposure of the myristate group. Interacts with host AP3D1; this interaction allows the polyprotein trafficking to multivesicular bodies during virus assembly. Part of the pre-integration complex (PIC) which is composed of viral genome, matrix protein, Vpr and integrase. Homodimer; the homodimer further multimerizes as homohexamers or homopentamers. Interacts with human PPIA/CYPA. Interacts with human NUP153. Interacts with host PDZD8; this interaction stabilizes the capsid. Interacts with monkey TRIM5; this interaction destabilizes the capsid. As to quaternary structure, homodimer, whose active site consists of two apposed aspartic acid residues. In terms of assembly, heterodimer of p66 RT and p51 RT (RT p66/p51). Heterodimerization of RT is essential for DNA polymerase activity. The overall folding of the subdomains is similar in p66 RT and p51 RT but the spatial arrangements of the subdomains are dramatically different. Homotetramer; may further associate as a homohexadecamer. Part of the pre-integration complex (PIC) which is composed of viral genome, matrix protein, Vpr and integrase. Interacts with human SMARCB1/INI1 and human PSIP1/LEDGF isoform 1. Interacts with human KPNA3; this interaction might play a role in nuclear import of the pre-integration complex. Interacts with human NUP153; this interaction might play a role in nuclear import of the pre-integration complex. Mg(2+) is required as a cofactor. In terms of processing, specific enzymatic cleavages by the viral protease yield mature proteins. The protease is released by autocatalytic cleavage. The polyprotein is cleaved during and after budding, this process is termed maturation. Proteolytic cleavage of p66 RT removes the RNase H domain to yield the p51 RT subunit. Nucleocapsid protein p7 might be further cleaved after virus entry.

It localises to the host cell membrane. The protein localises to the host endosome. It is found in the host multivesicular body. The protein resides in the virion membrane. Its subcellular location is the host nucleus. It localises to the host cytoplasm. The protein localises to the virion. It catalyses the reaction Endopeptidase for which the P1 residue is preferably hydrophobic.. The catalysed reaction is Endohydrolysis of RNA in RNA/DNA hybrids. Three different cleavage modes: 1. sequence-specific internal cleavage of RNA. Human immunodeficiency virus type 1 and Moloney murine leukemia virus enzymes prefer to cleave the RNA strand one nucleotide away from the RNA-DNA junction. 2. RNA 5'-end directed cleavage 13-19 nucleotides from the RNA end. 3. DNA 3'-end directed cleavage 15-20 nucleotides away from the primer terminus.. The enzyme catalyses 3'-end directed exonucleolytic cleavage of viral RNA-DNA hybrid.. It carries out the reaction DNA(n) + a 2'-deoxyribonucleoside 5'-triphosphate = DNA(n+1) + diphosphate. With respect to regulation, protease: The viral protease is inhibited by many synthetic protease inhibitors (PIs), such as amprenavir, atazanavir, indinavir, loprinavir, nelfinavir, ritonavir and saquinavir. Use of protease inhibitors in tritherapy regimens permit more ambitious therapeutic strategies. Reverse transcriptase/ribonuclease H: RT can be inhibited either by nucleoside RT inhibitors (NRTIs) or by non nucleoside RT inhibitors (NNRTIs). NRTIs act as chain terminators, whereas NNRTIs inhibit DNA polymerization by binding a small hydrophobic pocket near the RT active site and inducing an allosteric change in this region. Classical NRTIs are abacavir, adefovir (PMEA), didanosine (ddI), lamivudine (3TC), stavudine (d4T), tenofovir (PMPA), zalcitabine (ddC), and zidovudine (AZT). Classical NNRTIs are atevirdine (BHAP U-87201E), delavirdine, efavirenz (DMP-266), emivirine (I-EBU), and nevirapine (BI-RG-587). The tritherapies used as a basic effective treatment of AIDS associate two NRTIs and one NNRTI. In terms of biological role, mediates, with Gag polyprotein, the essential events in virion assembly, including binding the plasma membrane, making the protein-protein interactions necessary to create spherical particles, recruiting the viral Env proteins, and packaging the genomic RNA via direct interactions with the RNA packaging sequence (Psi). Gag-Pol polyprotein may regulate its own translation, by the binding genomic RNA in the 5'-UTR. At low concentration, the polyprotein would promote translation, whereas at high concentration, the polyprotein would encapsidate genomic RNA and then shut off translation. Its function is as follows. Targets the polyprotein to the plasma membrane via a multipartite membrane-binding signal, that includes its myristoylated N-terminus. Matrix protein is part of the pre-integration complex. Implicated in the release from host cell mediated by Vpu. Binds to RNA. Functionally, forms the conical core that encapsulates the genomic RNA-nucleocapsid complex in the virion. Most core are conical, with only 7% tubular. The core is constituted by capsid protein hexamer subunits. The core is disassembled soon after virion entry. Host restriction factors such as TRIM5-alpha or TRIMCyp bind retroviral capsids and cause premature capsid disassembly, leading to blocks in reverse transcription. Capsid restriction by TRIM5 is one of the factors which restricts HIV-1 to the human species. Host PIN1 apparently facilitates the virion uncoating. On the other hand, interactions with PDZD8 or CYPA stabilize the capsid. Encapsulates and protects viral dimeric unspliced genomic RNA (gRNA). Binds these RNAs through its zinc fingers. Acts as a nucleic acid chaperone which is involved in rearangement of nucleic acid secondary structure during gRNA retrotranscription. Also facilitates template switch leading to recombination. As part of the polyprotein, participates in gRNA dimerization, packaging, tRNA incorporation and virion assembly. In terms of biological role, aspartyl protease that mediates proteolytic cleavages of Gag and Gag-Pol polyproteins during or shortly after the release of the virion from the plasma membrane. Cleavages take place as an ordered, step-wise cascade to yield mature proteins. This process is called maturation. Displays maximal activity during the budding process just prior to particle release from the cell. Also cleaves Nef and Vif, probably concomitantly with viral structural proteins on maturation of virus particles. Hydrolyzes host EIF4GI and PABP1 in order to shut off the capped cellular mRNA translation. The resulting inhibition of cellular protein synthesis serves to ensure maximal viral gene expression and to evade host immune response. Its function is as follows. Multifunctional enzyme that converts the viral RNA genome into dsDNA in the cytoplasm, shortly after virus entry into the cell. This enzyme displays a DNA polymerase activity that can copy either DNA or RNA templates, and a ribonuclease H (RNase H) activity that cleaves the RNA strand of RNA-DNA heteroduplexes in a partially processive 3' to 5' endonucleasic mode. Conversion of viral genomic RNA into dsDNA requires many steps. A tRNA(3)-Lys binds to the primer-binding site (PBS) situated at the 5'-end of the viral RNA. RT uses the 3' end of the tRNA primer to perform a short round of RNA-dependent minus-strand DNA synthesis. The reading proceeds through the U5 region and ends after the repeated (R) region which is present at both ends of viral RNA. The portion of the RNA-DNA heteroduplex is digested by the RNase H, resulting in a ssDNA product attached to the tRNA primer. This ssDNA/tRNA hybridizes with the identical R region situated at the 3' end of viral RNA. This template exchange, known as minus-strand DNA strong stop transfer, can be either intra- or intermolecular. RT uses the 3' end of this newly synthesized short ssDNA to perform the RNA-dependent minus-strand DNA synthesis of the whole template. RNase H digests the RNA template except for two polypurine tracts (PPTs) situated at the 5'-end and near the center of the genome. It is not clear if both polymerase and RNase H activities are simultaneous. RNase H probably can proceed both in a polymerase-dependent (RNA cut into small fragments by the same RT performing DNA synthesis) and a polymerase-independent mode (cleavage of remaining RNA fragments by free RTs). Secondly, RT performs DNA-directed plus-strand DNA synthesis using the PPTs that have not been removed by RNase H as primers. PPTs and tRNA primers are then removed by RNase H. The 3' and 5' ssDNA PBS regions hybridize to form a circular dsDNA intermediate. Strand displacement synthesis by RT to the PBS and PPT ends produces a blunt ended, linear dsDNA copy of the viral genome that includes long terminal repeats (LTRs) at both ends. Functionally, catalyzes viral DNA integration into the host chromosome, by performing a series of DNA cutting and joining reactions. This enzyme activity takes place after virion entry into a cell and reverse transcription of the RNA genome in dsDNA. The first step in the integration process is 3' processing. This step requires a complex comprising the viral genome, matrix protein, Vpr and integrase. This complex is called the pre-integration complex (PIC). The integrase protein removes 2 nucleotides from each 3' end of the viral DNA, leaving recessed CA OH's at the 3' ends. In the second step, the PIC enters cell nucleus. This process is mediated through integrase and Vpr proteins, and allows the virus to infect a non dividing cell. This ability to enter the nucleus is specific of lentiviruses, other retroviruses cannot and rely on cell division to access cell chromosomes. In the third step, termed strand transfer, the integrase protein joins the previously processed 3' ends to the 5' ends of strands of target cellular DNA at the site of integration. The 5'-ends are produced by integrase-catalyzed staggered cuts, 5 bp apart. A Y-shaped, gapped, recombination intermediate results, with the 5'-ends of the viral DNA strands and the 3' ends of target DNA strands remaining unjoined, flanking a gap of 5 bp. The last step is viral DNA integration into host chromosome. This involves host DNA repair synthesis in which the 5 bp gaps between the unjoined strands are filled in and then ligated. Since this process occurs at both cuts flanking the HIV genome, a 5 bp duplication of host DNA is produced at the ends of HIV-1 integration. Alternatively, Integrase may catalyze the excision of viral DNA just after strand transfer, this is termed disintegration. The polypeptide is Gag-Pol polyprotein (gag-pol) (Homo sapiens (Human)).